The following is a 907-amino-acid chain: MSGQTLTDRIAAAQYSVTGSAVARAVCKATTHEVMGPKKKHLDYLIQATNETNVNIPQMADTLFERATNSSWVVVFKALVTTHHLMVHGNERFIQYLASRNTLFNLSNFLDKSGSHGYDMSTFIRRYSRYLNEKAFSYRQMAFDFARVKKGADGVMRTMAPEKLLKSMPILQGQIDALLEFDVHPNELTNGVINAAFMLLFKDLIKLFACYNDGVINLLEKFFEMKKGQCKDALEIYKRFLTRMTRVSEFLKVAEQVGIDKGDIPDLTQAPSSLMETLEQHLNTLEGKKPGNNEGSGAPSPLSKSSPATTVTSPNSTPAKTIDTSPPVDLFATASAAVPVSTSKPSSDLLDLQPDFSSGGAAAAAAPAPPPPAGGATAWGDLLGEDSLAALSSVPSEAQISDPFAPEPTPPTTTAEIATASASASTTTTVTAVTAEVDLFGDAFAASPGEAPAASEGAAAPATPTPVAAALDACSGNDPFAPSEGSAEAAPELDLFAMKPPETSVPVVTPTASTAPPVPATAPSPAPAVAAAAAATTAATAAATTTTTTSAATATTAPPALDIFGDLFESTPEVAAAPKPDAAPSIDLFSTDAFSSPPQGASPVPESSLTADLLSVDAFAAPSPATTASPAKVDSSGVIDLFGDAFGSSASEPQPASQAASSSSASADLLAGFGGSFMAPSPSPVTPAQNNLLQPNFEAAFGTTPSTSSSSSFDPSVFDGLGDLLMPTMAPAGQPAPVSMVPPSPAMAASKALGSDLDSSLASLVGNLGISGTTTKKGDLQWNAGEKKLTGGANWQPKVAPATWSAGVPPSAPLQGAVPPTSSVPPVAGAPSVGQPGAGFGMPPAGTGMPMMPQQPVMFAQPMMRPPFGAAAVPGTQLSPSPTPASQSPKKPPAKDPLADLNIKDFL.

An ENTH domain is found at 14–145 (QYSVTGSAVA…FSYRQMAFDF (132 aa)). Disordered stretches follow at residues 285 to 326 (LEGK…DTSP), 342 to 380 (TSKPSSDLLDLQPDFSSGGAAAAAAPAPPPPAGGATAWG), 393 to 414 (SVPSEAQISDPFAPEPTPPTTT), and 505 to 525 (VPVVTPTASTAPPVPATAPSP). 3 positions are modified to phosphoserine: S296, S300, and S306. The segment covering 302 to 324 (LSKSSPATTVTSPNSTPAKTIDT) has biased composition (polar residues). Residue T310 is glycosylated (O-linked (GlcNAc) threonine). S313 bears the Phosphoserine mark. T317 is modified (phosphothreonine). Over residues 505–515 (VPVVTPTASTA) the composition is skewed to low complexity. The segment covering 516–525 (PPVPATAPSP) has biased composition (pro residues). 5 positions are modified to phosphoserine: S596, S602, S623, S629, and S763. Position 865 is an asymmetric dimethylarginine; alternate (R865). Omega-N-methylarginine; alternate is present on R865. Residues 867-907 (PFGAAAVPGTQLSPSPTPASQSPKKPPAKDPLADLNIKDFL) form a disordered region. Over residues 893-907 (PAKDPLADLNIKDFL) the composition is skewed to basic and acidic residues.

This sequence belongs to the PICALM/SNAP91 family. As to quaternary structure, binds AP2A2. Interacts with AP2B1; clathrin competes with SNAP91. In terms of processing, thr-310 can be modified by the addition of N-acetylglucosamine which can be further phosphorylated. There is no evidence for direct Thr-310 phosphorylation.

The protein resides in the cell membrane. The protein localises to the membrane. Its subcellular location is the coated pit. Its function is as follows. Adaptins are components of the adapter complexes which link clathrin to receptors in coated vesicles. Clathrin-associated protein complexes are believed to interact with the cytoplasmic tails of membrane proteins, leading to their selection and concentration. Binding of AP180 to clathrin triskelia induces their assembly into 60-70 nm coats. The protein is Clathrin coat assembly protein AP180 (SNAP91) of Homo sapiens (Human).